A 62-amino-acid polypeptide reads, in one-letter code: Large ribosomal subunit protein bL33c (62 aa).

This sequence belongs to the bacterial ribosomal protein bL33 family.

It is found in the plastid. It localises to the chloroplast. The chain is Large ribosomal subunit protein bL33c from Cyanidioschyzon merolae (strain NIES-3377 / 10D) (Unicellular red alga).